The following is a 69-amino-acid chain: DNA gyrase inhibitor YacG (69 aa).

Residues Cys-7, Cys-10, Cys-26, and Cys-30 each coordinate Zn(2+).

This sequence belongs to the DNA gyrase inhibitor YacG family. In terms of assembly, interacts with GyrB. Zn(2+) is required as a cofactor.

In terms of biological role, inhibits all the catalytic activities of DNA gyrase by preventing its interaction with DNA. Acts by binding directly to the C-terminal domain of GyrB, which probably disrupts DNA binding by the gyrase. This chain is DNA gyrase inhibitor YacG, found in Shewanella sp. (strain ANA-3).